Here is an 88-residue protein sequence, read N- to C-terminus: MGIARILSAVLFLSVLFVVTFPALLSADHHDGRIDTCRLPSDRGRCKASFECWYFNGRTCAKFIYGGCGGNGNKFPTQEACMKRCAKA.

A signal peptide spans 1–27; sequence MGIARILSAVLFLSVLFVVTFPALLSA. A propeptide spanning residues 28 to 33 is cleaved from the precursor; it reads DHHDGR. A BPTI/Kunitz inhibitor domain is found at 37–85; that stretch reads CRLPSDRGRCKASFECWYFNGRTCAKFIYGGCGGNGNKFPTQEACMKRC. 3 disulfide bridges follow: Cys37–Cys85, Cys46–Cys68, and Cys60–Cys81.

This sequence belongs to the venom Kunitz-type family. 02 (native) subfamily. Expressed by the venom gland.

It is found in the secreted. Its function is as follows. Serine protease inhibitor that inhibits trypsin (Ki=0.281 nM), kallikrein (Ki=337 nM), and chymotrypsin. This is Kunitz-type kappaPI-theraphotoxin-Hs1c from Cyriopagopus schmidti (Chinese bird spider).